Here is a 208-residue protein sequence, read N- to C-terminus: Proheparin-binding EGF-like growth factor (208 aa).

Residues 1–23 (MKLLPSVVLKLFLAAVLSALVTG) form the signal peptide. A propeptide spanning residues 24–62 (ESLERLRRGLAAATSNPDPPTGTTNQLLPTGADRAQEVQ) is cleaved from the precursor. Topologically, residues 24 to 160 (ESLERLRRGL…ENPLYTYDHT (137 aa)) are extracellular. The tract at residues 82–103 (ALATPGKEKNGKKKRKGKGLGK) is disordered. O-linked (GalNAc...) threonine glycosylation occurs at Thr85. Positions 91–102 (NGKKKRKGKGLG) are enriched in basic residues. The 41-residue stretch at 104-144 (KRDPCLKKYKDYCIHGECRYLKELRIPSCHCLPGYHGQRCH) folds into the EGF-like domain. Disulfide bonds link Cys108/Cys121, Cys116/Cys132, and Cys134/Cys143. Residues 149–208 (PVENPLYTYDHTTVLAVVAVVLSSVCLLVIVGLLMFRYHRRGGYDLESEEKVKLGMASSH) constitute a propeptide, C-terminal. The chain crosses the membrane as a helical span at residues 161 to 184 (TVLAVVAVVLSSVCLLVIVGLLMF). Residues 185-208 (RYHRRGGYDLESEEKVKLGMASSH) lie on the Cytoplasmic side of the membrane.

In terms of assembly, interacts with FBLN1. Interacts with EGFR and ERBB4. Post-translationally, O-glycosylated. Most abundant in skeletal muscle, lung, spleen brain and heart.

It is found in the secreted. The protein resides in the extracellular space. It localises to the cell membrane. Its function is as follows. Growth factor that mediates its effects via EGFR, ERBB2 and ERBB4. Required for normal cardiac valve formation and normal heart function. Promotes smooth muscle cell proliferation. May be involved in macrophage-mediated cellular proliferation. It is mitogenic for fibroblasts, but not endothelial cells. It is able to bind EGF receptor/EGFR with higher affinity than EGF itself and is a far more potent mitogen for smooth muscle cells than EGF. Also acts as a diphtheria toxin receptor. This is Proheparin-binding EGF-like growth factor (Hbegf) from Rattus norvegicus (Rat).